The primary structure comprises 196 residues: Agamous-like MADS-box protein AGL70 (196 aa).

The region spanning 1–61 is the MADS-box domain; sequence MGRRKVEIKR…GKLYDSASGD (61 aa). Positions 8–15 match the Nuclear localization signal motif; sequence IKRIENKS. The 91-residue stretch at 80-170 folds into the K-box domain; the sequence is ALDLAEKIRN…ASQVGKKTFL (91 aa).

In terms of tissue distribution, mostly expressed in roots, leaves and flowers, and, to a lower extent, in inflorescence, siliques, pollen and shoots.

The protein resides in the nucleus. Probable transcription factor involved in the negative regulation of flowering time, probably through the photoperiodic and vernalization pathways; more efficient in cv. Landsberg erecta than in cv. Columbia background. Prevents premature flowering. Involved in the modulation of vernalization impact on flowering according to genotype acclimation to altitude. This Arabidopsis thaliana (Mouse-ear cress) protein is Agamous-like MADS-box protein AGL70.